Reading from the N-terminus, the 466-residue chain is Cysteine--tRNA ligase (466 aa).

Cysteine 29 provides a ligand contact to Zn(2+). A 'HIGH' region motif is present at residues proline 31 to asparagine 41. Residues cysteine 210, histidine 235, and glutamate 239 each coordinate Zn(2+). The 'KMSKS' region motif lies at lysine 267 to serine 271. Lysine 270 contributes to the ATP binding site.

The protein belongs to the class-I aminoacyl-tRNA synthetase family. Monomer. Zn(2+) serves as cofactor.

The protein localises to the cytoplasm. The catalysed reaction is tRNA(Cys) + L-cysteine + ATP = L-cysteinyl-tRNA(Cys) + AMP + diphosphate. This is Cysteine--tRNA ligase from Solibacter usitatus (strain Ellin6076).